Here is a 138-residue protein sequence, read N- to C-terminus: Putative pre-16S rRNA nuclease (138 aa).

The protein belongs to the YqgF nuclease family.

The protein localises to the cytoplasm. Functionally, could be a nuclease involved in processing of the 5'-end of pre-16S rRNA. In Listeria innocua serovar 6a (strain ATCC BAA-680 / CLIP 11262), this protein is Putative pre-16S rRNA nuclease.